We begin with the raw amino-acid sequence, 527 residues long: Calcium and calcium/calmodulin-dependent serine/threonine-protein kinase (527 aa).

The 303-residue stretch at 12–314 folds into the Protein kinase domain; the sequence is YEVSEILGRG…AQELLSDPWV (303 aa). ATP is bound at residue 18–26; the sequence is LGRGGFSVV. The interval 25–51 is disordered; sequence VVRKGTRKSNNDDEKSQSQSKSQSQSQ. The segment covering 41–51 has biased composition (low complexity); that stretch reads QSQSKSQSQSQ. Lys-55 contributes to the ATP binding site. The interval 59–78 is disordered; sequence RLGTSNNLPRKKDGGENSTE. The active-site Proton acceptor is the Asp-179. A helical membrane pass occupies residues 239-255; it reads MWSLGVILYILLSGYPP. At Thr-279 the chain carries Phosphothreonine. The segment at 337-350 is calmodulin-binding; it reads ARRKLRAAAIASVW. Residues 358–379 adopt a coiled-coil conformation; that stretch reads TKKLKSLVGSYDLKEDEIENLR. EF-hand domains follow at residues 408–443, 444–479, and 486–521; these read SLIP…LKNS, KGED…LPYD, and TEPG…DSSL. Asp-421, Asn-423, Asp-425, Thr-427, Glu-432, Asp-457, Asp-459, Ser-461, Cys-463, Glu-468, Asp-499, Asn-501, Asp-503, Lys-505, and Glu-510 together coordinate Ca(2+).

The protein belongs to the protein kinase superfamily. CAMK Ser/Thr protein kinase family. CaMK subfamily. In terms of processing, autophosphorylation.

The protein resides in the membrane. It catalyses the reaction L-seryl-[protein] + ATP = O-phospho-L-seryl-[protein] + ADP + H(+). The catalysed reaction is L-threonyl-[protein] + ATP = O-phospho-L-threonyl-[protein] + ADP + H(+). Its activity is regulated as follows. Activated by calcium. Autophosphorylation may play an important role in the regulation of the kinase activity. Functionally, protein kinase that recognizes the calcium spiking induced by Nod factors and translates this signal to components controlling nodulation and mycorrhizal infection responses. In Pisum sativum (Garden pea), this protein is Calcium and calcium/calmodulin-dependent serine/threonine-protein kinase (SYM9).